Here is an 84-residue protein sequence, read N- to C-terminus: Large ribosomal subunit protein bL31B (84 aa).

It belongs to the bacterial ribosomal protein bL31 family. Type B subfamily. As to quaternary structure, part of the 50S ribosomal subunit.

This Streptomyces griseus subsp. griseus (strain JCM 4626 / CBS 651.72 / NBRC 13350 / KCC S-0626 / ISP 5235) protein is Large ribosomal subunit protein bL31B.